Reading from the N-terminus, the 241-residue chain is ATP synthase subunit a (241 aa).

The next 5 helical transmembrane spans lie at 30 to 50 (GQVFLTSWILLGALLVFISLG), 91 to 111 (FIGTLFLFVFVSNWGGALIPW), 128 to 148 (INTTIALALLVSLSYFYAGLS), 193 to 213 (LVVGVLVFLVPLILPIPVMFL), and 214 to 234 (GLFTSAIQALIFATLAAYYIG).

This sequence belongs to the ATPase A chain family. In terms of assembly, F-type ATPases have 2 components, CF(1) - the catalytic core - and CF(0) - the membrane proton channel. CF(1) has five subunits: alpha(3), beta(3), gamma(1), delta(1), epsilon(1). CF(0) has four main subunits: a, b, b' and c.

The protein resides in the cellular thylakoid membrane. In terms of biological role, key component of the proton channel; it plays a direct role in the translocation of protons across the membrane. The sequence is that of ATP synthase subunit a from Prochlorococcus marinus (strain MIT 9215).